The following is a 328-amino-acid chain: Ribosomal RNA large subunit methyltransferase F (328 aa).

Residues 1–38 (MTDTPKPPRKKPQRPAKPAAPREKATLHPRNRHQGHYD) form a disordered region.

Belongs to the methyltransferase superfamily. METTL16/RlmF family.

Its subcellular location is the cytoplasm. The enzyme catalyses adenosine(1618) in 23S rRNA + S-adenosyl-L-methionine = N(6)-methyladenosine(1618) in 23S rRNA + S-adenosyl-L-homocysteine + H(+). Specifically methylates the adenine in position 1618 of 23S rRNA. The polypeptide is Ribosomal RNA large subunit methyltransferase F (Pseudomonas syringae pv. tomato (strain ATCC BAA-871 / DC3000)).